The primary structure comprises 186 residues: Ribosome-recycling factor (186 aa).

Residues 135–164 form a disordered region; that stretch reads DGMDDLKKAEKDGEIGQDESRAQSERVQKM.

Belongs to the RRF family.

The protein localises to the cytoplasm. Responsible for the release of ribosomes from messenger RNA at the termination of protein biosynthesis. May increase the efficiency of translation by recycling ribosomes from one round of translation to another. The sequence is that of Ribosome-recycling factor from Sinorhizobium medicae (strain WSM419) (Ensifer medicae).